Here is a 277-residue protein sequence, read N- to C-terminus: Acetyl-coenzyme A carboxylase carboxyl transferase subunit beta (277 aa).

The CoA carboxyltransferase N-terminal domain occupies 25-277; sequence LVRRCPVCHT…DLLRLHKGES (253 aa). Zn(2+)-binding residues include cysteine 29, cysteine 32, cysteine 47, and cysteine 50. The C4-type zinc-finger motif lies at 29–50; sequence CPVCHTTFLTDHWEPTRLCPAC.

Belongs to the AccD/PCCB family. In terms of assembly, acetyl-CoA carboxylase is a heterohexamer composed of biotin carboxyl carrier protein (AccB), biotin carboxylase (AccC) and two subunits each of ACCase subunit alpha (AccA) and ACCase subunit beta (AccD). Zn(2+) serves as cofactor.

It is found in the cytoplasm. It carries out the reaction N(6)-carboxybiotinyl-L-lysyl-[protein] + acetyl-CoA = N(6)-biotinyl-L-lysyl-[protein] + malonyl-CoA. It participates in lipid metabolism; malonyl-CoA biosynthesis; malonyl-CoA from acetyl-CoA: step 1/1. Functionally, component of the acetyl coenzyme A carboxylase (ACC) complex. Biotin carboxylase (BC) catalyzes the carboxylation of biotin on its carrier protein (BCCP) and then the CO(2) group is transferred by the transcarboxylase to acetyl-CoA to form malonyl-CoA. The sequence is that of Acetyl-coenzyme A carboxylase carboxyl transferase subunit beta from Levilactobacillus brevis (strain ATCC 367 / BCRC 12310 / CIP 105137 / JCM 1170 / LMG 11437 / NCIMB 947 / NCTC 947) (Lactobacillus brevis).